A 378-amino-acid chain; its full sequence is Chorismate synthase (378 aa).

Arg-49 provides a ligand contact to NADP(+). Residues 126 to 128 (RAS), Gly-287, 302 to 306 (KPTAT), and Arg-328 each bind FMN.

This sequence belongs to the chorismate synthase family. In terms of assembly, homotetramer. FMNH2 is required as a cofactor.

It carries out the reaction 5-O-(1-carboxyvinyl)-3-phosphoshikimate = chorismate + phosphate. The protein operates within metabolic intermediate biosynthesis; chorismate biosynthesis; chorismate from D-erythrose 4-phosphate and phosphoenolpyruvate: step 7/7. Its function is as follows. Catalyzes the anti-1,4-elimination of the C-3 phosphate and the C-6 proR hydrogen from 5-enolpyruvylshikimate-3-phosphate (EPSP) to yield chorismate, which is the branch point compound that serves as the starting substrate for the three terminal pathways of aromatic amino acid biosynthesis. This reaction introduces a second double bond into the aromatic ring system. This is Chorismate synthase from Synechococcus sp. (strain JA-3-3Ab) (Cyanobacteria bacterium Yellowstone A-Prime).